Reading from the N-terminus, the 174-residue chain is Large ribosomal subunit protein uL6 (174 aa).

This sequence belongs to the universal ribosomal protein uL6 family. In terms of assembly, part of the 50S ribosomal subunit.

In terms of biological role, this protein binds to the 23S rRNA, and is important in its secondary structure. It is located near the subunit interface in the base of the L7/L12 stalk, and near the tRNA binding site of the peptidyltransferase center. The chain is Large ribosomal subunit protein uL6 from Acidithiobacillus ferrooxidans (strain ATCC 23270 / DSM 14882 / CIP 104768 / NCIMB 8455) (Ferrobacillus ferrooxidans (strain ATCC 23270)).